Consider the following 347-residue polypeptide: UPF0284 protein M1425_0030 (347 aa).

The protein belongs to the UPF0284 family.

This Saccharolobus islandicus (strain M.14.25 / Kamchatka #1) (Sulfolobus islandicus) protein is UPF0284 protein M1425_0030.